The primary structure comprises 76 residues: uncharacterized protein (76 aa).

The helical transmembrane segment at 24-44 (GAIFLVCYPLYCVVCFVSVLC) threads the bilayer.

Its subcellular location is the membrane. This is an uncharacterized protein from Schizosaccharomyces pombe (strain 972 / ATCC 24843) (Fission yeast).